A 516-amino-acid chain; its full sequence is Anthranilate synthase component 1 (516 aa).

L-tryptophan contacts are provided by residues Ser-56 and 283 to 285; that span reads PYM. A chorismate-binding site is contributed by 324-325; that stretch reads GT. Glu-351 provides a ligand contact to Mg(2+). Residues Tyr-439, Arg-459, 473–475, and Gly-475 each bind chorismate; that span reads GGG. Glu-488 lines the Mg(2+) pocket.

It belongs to the anthranilate synthase component I family. In terms of assembly, heterotetramer consisting of two non-identical subunits: a beta subunit (TrpG) and a large alpha subunit (TrpE). It depends on Mg(2+) as a cofactor.

It carries out the reaction chorismate + L-glutamine = anthranilate + pyruvate + L-glutamate + H(+). The protein operates within amino-acid biosynthesis; L-tryptophan biosynthesis; L-tryptophan from chorismate: step 1/5. With respect to regulation, feedback inhibited by tryptophan. Part of a heterotetrameric complex that catalyzes the two-step biosynthesis of anthranilate, an intermediate in the biosynthesis of L-tryptophan. In the first step, the glutamine-binding beta subunit (TrpG) of anthranilate synthase (AS) provides the glutamine amidotransferase activity which generates ammonia as a substrate that, along with chorismate, is used in the second step, catalyzed by the large alpha subunit of AS (TrpE) to produce anthranilate. In the absence of TrpG, TrpE can synthesize anthranilate directly from chorismate and high concentrations of ammonia. This is Anthranilate synthase component 1 (trpE) from Mycobacterium bovis (strain ATCC BAA-935 / AF2122/97).